The chain runs to 756 residues: Hyperosmolality-gated Ca2+ permeable channel 1.5 (756 aa).

Helical transmembrane passes span Ile7–Ile27, Ile101–Val121, Ser154–Leu174, Leu373–Val393, Phe425–Met445, Tyr465–Gln485, Ala510–Leu530, Phe574–Phe594, Val628–Ala648, and Ser651–Gly671. The interval Pro731–Thr756 is disordered. Over residues Arg746 to Thr756 the composition is skewed to polar residues.

It belongs to the CSC1 (TC 1.A.17) family.

It is found in the membrane. Functionally, acts as an osmosensitive calcium-permeable cation channel. The sequence is that of Hyperosmolality-gated Ca2+ permeable channel 1.5 from Arabidopsis thaliana (Mouse-ear cress).